The primary structure comprises 68 residues: Beta-defensin 1 (68 aa).

A signal peptide spans 1–21 (MRTSYLLLFTLCLLLSEMASG). The propeptide occupies 22-32 (GNFLTGLGHRS). 3 disulfides stabilise this stretch: C37–C66, C44–C59, and C49–C67.

It belongs to the beta-defensin family. Monomer. Homodimer.

Its subcellular location is the secreted. The protein resides in the membrane. Functionally, has bactericidal activity. May act as a ligand for C-C chemokine receptor CCR6. Positively regulates the sperm motility and bactericidal activity in a CCR6-dependent manner. Binds to CCR6 and triggers Ca2+ mobilization in the sperm which is important for its motility. This Pongo pygmaeus (Bornean orangutan) protein is Beta-defensin 1 (DEFB1).